We begin with the raw amino-acid sequence, 1382 residues long: MAQAYVGQKRIRRYYGNIREVLEMPNLIEVQKSSYDLFLRSGDAEGHQDGEGIQGVFQSVFPIKDFNETATLEFVKYELEKPKYDVEECQSRDMTYAAPLKVTLRLIVFDVDETTGAKSVKDIKEQDVYMGDMPLMTQNGTFIVNGTERVVVSQMHRSPGVFFDHDRGKTHSSGKLLFACRIIPYRGSWLDFEFDAKDLVFARIDRRRKLPVTTLLYALGMDQEGIMDAFYNTVDYKLQRAGKGQAAGWVTKFFPERVRGTRPSFDLVNAETGEIITKAGDKVTPRLVKQLAEKGDINLLLPFEKIVGRFVAKDIINEQTGLIYAEAGDEITVEYDRDGEISGGLLKVLLDNGIEDIPVLDIDHVNVGPYIRNTMAADKNMSRDGALMDIYRVMRPGEPPTVEAASALFDSLFFDSERYDLSAVGRVKMNMRLDLDAPDTQRTLRKEDIIACIRGLVELRDGKGEIDDIDHLGNRRVRSVGELMENQYRIGLLRMERAIRERMSGVEIDTVMPQDLINAKPAAAAVREFFGSSQLSQFMDQTNPLSEVTDKRRLSALGPGGLTRERAGFEVRDVHPTHYGRMCPIETPEGQNIGLINSLATFARVNKYGFIETPYRKVVEGKVTDEVVYMSATEEMRHTIAQANATLDESGKFVDELVSTRQAGDFMLNPVEAVDLIDVSPKQLVSVAAALIPFLENDDANRALMGSNMQRQAVPLLRAEAPFVGTGMEATVARDSGAAIMARRGGIIDQVDAQRIVIRATEDLGAGDAGVDIYRLRKFKRSNQSSTINQRPLVKVGDKVVKGQVVADGPSTDQGELAIGRNVVVAFMPWNGYNYEDSILISERIHRDDVFTSIHIDEYEVAARDTKLGPEEITRDIPNVGEEALRNLDEAGIVYIGAEVGPGDILVGKITPKGESPMTPEEKLLRAIFGEKASDVRDTSLRLPPGAYGTIVEVRVFNRHGVDKDERALQIEREEVERLARDRDDELAILERNIYARLKSLIMGKEVVKGPKGIRAGAVVDEDLLGQLSRGQWWQLAVADEDTAKEVEALNQQFDAQKRALDNRFDDKVEKVRQGDDLPPGVMKMVKVFVAVKRKLQAGDKMAGRHGNKGVVSKVVPIEDMPFLSDGTPVDLVFNPLGVPSRMNVGQILETHMGWASRGLGIKIDEALQDYRRNGDMTPVREAMQNGYGDDFYAETFEGMEDETLLEHADAVRGGVPISTPVFDGAKEADINDALRRAGFDTSGQSIVFDGRTGEQFARPVTVGMKYVLKLHHLVDDKMHARSTGPYSLVTQQPLGGKAQFGGQRLGEMEVWALEAYGAAYTLQEMLTVKSDDVAGRTKVYESIVKGEDNFEAGVPESFNVLVKEVRGLGLNMELLDAEDEE.

This sequence belongs to the RNA polymerase beta chain family. In terms of assembly, the RNAP catalytic core consists of 2 alpha, 1 beta, 1 beta' and 1 omega subunit. When a sigma factor is associated with the core the holoenzyme is formed, which can initiate transcription.

It carries out the reaction RNA(n) + a ribonucleoside 5'-triphosphate = RNA(n+1) + diphosphate. In terms of biological role, DNA-dependent RNA polymerase catalyzes the transcription of DNA into RNA using the four ribonucleoside triphosphates as substrates. The protein is DNA-directed RNA polymerase subunit beta of Paracoccus denitrificans (strain Pd 1222).